The primary structure comprises 735 residues: Ion-translocating oxidoreductase complex subunit C (735 aa).

2 4Fe-4S ferredoxin-type domains span residues 368–397 (MGAP…QQLY) and 407–436 (KATA…VQYF). [4Fe-4S] cluster is bound by residues Cys-377, Cys-380, Cys-383, Cys-387, Cys-416, Cys-419, Cys-422, and Cys-426. Residues 534–711 (QARAKQAAHP…EPVEPADPRK (178 aa)) are disordered.

This sequence belongs to the 4Fe4S bacterial-type ferredoxin family. RnfC subfamily. The complex is composed of six subunits: RsxA, RsxB, RsxC, RsxD, RsxE and RsxG. The cofactor is [4Fe-4S] cluster.

The protein localises to the cell inner membrane. Part of a membrane-bound complex that couples electron transfer with translocation of ions across the membrane. Required to maintain the reduced state of SoxR. The protein is Ion-translocating oxidoreductase complex subunit C of Salmonella paratyphi A (strain ATCC 9150 / SARB42).